The primary structure comprises 473 residues: Photosystem II CP43 reaction center protein (473 aa).

Positions 1–14 (MKTLYSLRRFYHVE) are excised as a propeptide. Position 15 is an N-acetylthreonine (T15). T15 carries the phosphothreonine modification. The next 5 helical transmembrane spans lie at 69–93 (LFEVAHFVPEKPMYEQGLILLPHLA), 134–155 (LLGPETLEESFPFFGYVWKDRN), 178–200 (KALYFGGVYDTWAPGGGDVRKIT), 255–275 (KPFAWARRALVWSGEAYLSYS), and 291–312 (WFNNTAYPSEFYGPTGPEASQA). Residue E367 participates in [CaMn4O5] cluster binding. Residues 447–471 (RARAAAAGFEKGIDRDFEPVLSMTP) form a helical membrane-spanning segment.

It belongs to the PsbB/PsbC family. PsbC subfamily. As to quaternary structure, PSII is composed of 1 copy each of membrane proteins PsbA, PsbB, PsbC, PsbD, PsbE, PsbF, PsbH, PsbI, PsbJ, PsbK, PsbL, PsbM, PsbT, PsbX, PsbY, PsbZ, Psb30/Ycf12, at least 3 peripheral proteins of the oxygen-evolving complex and a large number of cofactors. It forms dimeric complexes. The cofactor is Binds multiple chlorophylls and provides some of the ligands for the Ca-4Mn-5O cluster of the oxygen-evolving complex. It may also provide a ligand for a Cl- that is required for oxygen evolution. PSII binds additional chlorophylls, carotenoids and specific lipids..

It localises to the plastid. Its subcellular location is the chloroplast thylakoid membrane. One of the components of the core complex of photosystem II (PSII). It binds chlorophyll and helps catalyze the primary light-induced photochemical processes of PSII. PSII is a light-driven water:plastoquinone oxidoreductase, using light energy to abstract electrons from H(2)O, generating O(2) and a proton gradient subsequently used for ATP formation. The sequence is that of Photosystem II CP43 reaction center protein from Nicotiana tabacum (Common tobacco).